The following is a 1171-amino-acid chain: DNA-directed RNA polymerase subunit beta' (1171 aa).

Zn(2+)-binding residues include cysteine 60, cysteine 62, cysteine 75, and cysteine 78. The interval 299–319 is disordered; it reads GRRGKPVTGPGNRPLKSLSDM. Mg(2+) is bound by residues aspartate 449, aspartate 451, and aspartate 453. Positions 790, 864, 871, and 874 each coordinate Zn(2+).

Belongs to the RNA polymerase beta' chain family. As to quaternary structure, the RNAP catalytic core consists of 2 alpha, 1 beta, 1 beta' and 1 omega subunit. When a sigma factor is associated with the core the holoenzyme is formed, which can initiate transcription. Mg(2+) is required as a cofactor. Zn(2+) serves as cofactor.

It catalyses the reaction RNA(n) + a ribonucleoside 5'-triphosphate = RNA(n+1) + diphosphate. In terms of biological role, DNA-dependent RNA polymerase catalyzes the transcription of DNA into RNA using the four ribonucleoside triphosphates as substrates. In Alkaliphilus metalliredigens (strain QYMF), this protein is DNA-directed RNA polymerase subunit beta'.